We begin with the raw amino-acid sequence, 209 residues long: Large ribosomal subunit protein uL3 (209 aa).

Positions 127 to 166 are disordered; that stretch reads NFGGGSRTHGQSDRLRAPGSVGGSSDPSRTFKGTRMAGRM.

Belongs to the universal ribosomal protein uL3 family. As to quaternary structure, part of the 50S ribosomal subunit. Forms a cluster with proteins L14 and L19.

In terms of biological role, one of the primary rRNA binding proteins, it binds directly near the 3'-end of the 23S rRNA, where it nucleates assembly of the 50S subunit. The polypeptide is Large ribosomal subunit protein uL3 (Chlorobaculum tepidum (strain ATCC 49652 / DSM 12025 / NBRC 103806 / TLS) (Chlorobium tepidum)).